The chain runs to 275 residues: MGIRFYKANTPGTRNRSVSDFSEITHSKPEKSLTFNVQRAKGRNNRGVITSRHRGGGHKRLYRLIDFKRNKIGIAAKVATIEYDPNRNARIALLHYQDGEKRYILHPRGLNVGSSIISSLNAPVLTGNALPLKNIPLGGEVHNVELQPGAGGQLARAAGAVAQIVAKEGNLVTLRLPSGEVRLVSNECWATVGQVGNTDAINMVVGKAGRKRWLGKRPHVRGVVMNPCDHPHGGGEGRSPIGRPRPVSPWGKPALGQRTRKGHKYSDQMILRRRK.

The disordered stretch occupies residues Met-225–Lys-275.

It belongs to the universal ribosomal protein uL2 family. As to quaternary structure, part of the 50S ribosomal subunit.

The protein localises to the plastid. It localises to the chloroplast. The polypeptide is Large ribosomal subunit protein uL2c (rpl2) (Oltmannsiellopsis viridis (Marine flagellate)).